The primary structure comprises 1219 residues: Protein jagged-1 (1219 aa).

The signal sequence occupies residues 1-33 (MRSPRTRGRPGRPLSLLLALLCALRAKVCGASG). Residues 34–1067 (QFELEILSMQ…QRRPLKNRTD (1034 aa)) are Extracellular-facing. Asn-143 carries an N-linked (GlcNAc...) asparagine glycan. One can recognise a DSL domain in the interval 185-229 (VTCDDHYYGFGCNKFCRPRDDFFGHYACDQNGNKTCMEGWMGPEC). Disulfide bonds link Cys-187–Cys-196 and Cys-200–Cys-212. An important for interaction with NOTCH1 region spans residues 199–207 (FCRPRDDFF). N-linked (GlcNAc...) asparagine glycosylation is present at Asn-217. 40 disulfide bridges follow: Cys-220-Cys-229, Cys-234-Cys-245, Cys-238-Cys-251, Cys-253-Cys-262, Cys-265-Cys-276, Cys-271-Cys-282, Cys-284-Cys-293, Cys-300-Cys-312, Cys-306-Cys-322, Cys-324-Cys-333, Cys-340-Cys-351, Cys-345-Cys-360, Cys-362-Cys-371, Cys-378-Cys-389, Cys-383-Cys-398, Cys-400-Cys-409, Cys-416-Cys-427, Cys-421-Cys-436, Cys-438-Cys-447, Cys-454-Cys-464, Cys-458-Cys-473, Cys-475-Cys-484, Cys-491-Cys-502, Cys-496-Cys-511, Cys-513-Cys-522, Cys-529-Cys-540, Cys-534-Cys-549, Cys-551-Cys-560, Cys-578-Cys-605, Cys-599-Cys-615, Cys-617-Cys-626, Cys-633-Cys-644, Cys-638-Cys-653, Cys-655-Cys-664, Cys-671-Cys-682, Cys-676-Cys-691, Cys-693-Cys-702, Cys-709-Cys-720, Cys-714-Cys-729, and Cys-731-Cys-740. Positions 230 to 263 (NKAICRQGCSPKHGSCKLPGDCRCQYGWQGLYCD) constitute an EGF-like 1 domain. An EGF-like 2; atypical domain is found at 264 to 294 (KCIPHPGCVHGTCNEPWQCLCETNWGGQLCD). EGF-like domains follow at residues 296–334 (DLNYCGTHQPCLNRGTCSNTGPDKYQCSCPEGYSGPNCE) and 336–372 (AEHACLSDPCHNRGSCKETSSGFECECSPGWTGPTCS). Positions 374-410 (NIDDCSPNNCSHGGTCQDLVNGFKCVCPPQWTGKTCQ) constitute an EGF-like 5; calcium-binding domain. A glycan (N-linked (GlcNAc...) asparagine) is linked at Asn-382. The 37-residue stretch at 412–448 (DANECEAKPCVNARSCKNLIASYYCDCLPGWMGQNCD) folds into the EGF-like 6; calcium-binding domain. One can recognise an EGF-like 7; calcium-binding domain in the interval 450–485 (NINDCLGQCQNDASCRDLVNGYRCICPPGYAGDHCE). In terms of domain architecture, EGF-like 8; calcium-binding spans 487-523 (DIDECASNPCLNGGHCQNEINRFQCLCPTGFSGNLCQ). 2 EGF-like domains span residues 525–561 (DIDYCEPNPCQNGAQCYNRASDYFCKCPEDYEGKNCS) and 586–627 (DTPE…TYCH). Asn-559 is a glycosylation site (N-linked (GlcNAc...) asparagine). Residues 629–665 (NINDCEGNPCTNGGTCIDGVNSYKCICSDGWEGAHCE) enclose the EGF-like 11; calcium-binding domain. The EGF-like 12; calcium-binding domain maps to 667-703 (NINDCSQNPCHYGGTCRDLVNDFYCDCKNGWKGKTCH). 2 EGF-like domains span residues 705–741 (RDSQCDEATCNNGGTCYDEVDTFKCMCPGGWEGTTCN) and 744–780 (RNSSCLPNPCHNGGTCVVNGDSFTCVCKEGWEGPICT). A glycan (N-linked (GlcNAc...) asparagine) is linked at Asn-745. Disulfide bonds link Cys-748–Cys-759, Cys-753–Cys-768, Cys-770–Cys-779, Cys-786–Cys-797, Cys-791–Cys-806, Cys-808–Cys-817, Cys-824–Cys-835, Cys-829–Cys-844, Cys-846–Cys-855, Cys-925–Cys-936, and Cys-948–Cys-958. The EGF-like 15; calcium-binding domain occupies 782 to 818 (NTNDCSPHPCYNSGTCVDGDNWYRCECAPGFAGPDCR). Residues 820 to 856 (NINECQSSPCAFGATCVDEINGYQCICPPGHSGAKCH) form the EGF-like 16; calcium-binding domain. N-linked (GlcNAc...) asparagine glycans are attached at residues Asn-960, Asn-991, Asn-1045, and Asn-1064. Residues 1068 to 1093 (FLVPLLSSVLTVAWVCCLVTAFYWCV) traverse the membrane as a helical segment. At 1094 to 1219 (RKRRRKPSSH…QSLNRMEYIV (126 aa)) the chain is on the cytoplasmic side. The interval 1182 to 1219 (REEKVPQRTPTKHPNWTNKQDNRDLESAQSLNRMEYIV) is disordered. A compositionally biased stretch (polar residues) spans 1189-1200 (RTPTKHPNWTNK).

As to quaternary structure, interacts with NOTCH1. Interacts with NOTCH2 and NOTCH3. As to expression, widely expressed in a variety of tissues.

The protein resides in the membrane. It localises to the cell membrane. Functionally, ligand for multiple Notch receptors and involved in the mediation of Notch signaling. May be involved in cell-fate decisions during hematopoiesis. Enhances fibroblast growth factor-induced angiogenesis (in vitro). Seems to be involved in early and late stages of mammalian cardiovascular development. Inhibits myoblast differentiation. May regulate fibroblast growth factor-induced angiogenesis. This chain is Protein jagged-1 (Jag1), found in Rattus norvegicus (Rat).